Consider the following 145-residue polypeptide: MWFLVKATFWFSLVLVLLPFLDPSSSEKLEHGPKMEIGGTFSAANEAIQYISAICVEKPDVCEKGAETFVALGHRAREGARIAYEFLNTQFAEGDAAAPDVKVMTGTVTPAESVPSAEATEKAEPAFKRMPVPEHRLDPGPASGK.

A helical membrane pass occupies residues 1–21 (MWFLVKATFWFSLVLVLLPFL). The tract at residues 109 to 145 (TPAESVPSAEATEKAEPAFKRMPVPEHRLDPGPASGK) is disordered. Basic and acidic residues predominate over residues 119-138 (ATEKAEPAFKRMPVPEHRLD).

The protein resides in the membrane. This is an uncharacterized protein from Rhizobium meliloti (strain 1021) (Ensifer meliloti).